Reading from the N-terminus, the 827-residue chain is WD repeat-containing protein 27 (827 aa).

WD repeat units lie at residues 3-57, 62-101, 112-151, 155-194, 201-237, 292-337, 344-387, 502-542, 546-584, 590-629, 646-687, 698-740, 746-784, and 788-826; these read NPQD…IWNT, HQLLILRGHHQPITAMAFGNKVNPLLICSASLDYVIMWNL, LVPRGTVMGSLLGKVLCLQLSLDDHVVAVCAGNKIFMLDI, AVRAELQGHLGPVTAVEFCPWRAGTLISASEDRGFKVWDH, YSSSVLSAYPLLSLFIDAESRQLVTGCADGQLWIFSL, FPVL…LANL, YYKD…VLEI, KPGP…VFDA, GTPAVFSGHDGAVNAVCWSQDRRWLLSAARDGTLRMWSA, ALLLGKDMFSKPIQSAQFYYIDAFILLSSGPEFQLLRYHI, KLIC…VFDL, EAHS…LWDL, ERHFEGHPTRGYPCGIAFSPCGRFAACGAEDRHAYVYEM, and TFSHRLAGHTDTVTGVAFNPSAPQLATATLDGKLQLFLA.

This chain is WD repeat-containing protein 27 (WDR27), found in Homo sapiens (Human).